The following is a 417-amino-acid chain: MFSRDLTIAKYDADLFAAMEQEAQRQEEHIELIASENYTSPAVMEAQGSVLTNKYAEGYPGKRYYGGCEYVDVVEQLAIDRAKELFGADYANVQPHAGSQANAAVYLALLQGGDTILGMSLAHGGHLTHGAAVSSSGKLYNAIQYGIDANGLIDYDEVERLAVEHKPKMIVAGFSAYSQILDFPRFREIADKVGAYLFVDMAHVAGLVAAGVYPNPVPFADVVTTTTHKTLRGPRGGLILARANADIEKKLNSAVFPGAQGGPLEHVIAAKAICFKEALQPEFKAYQEQVVKNAQAMAEVFIARGFDVVSGGTKNHLFLLSLIKQDISGKDADAALGKAFITVNKNSVPNDPRSPFVTSGLRFGTPAVTTRGFKEAECKELAGWICDILADLNNEAVIDAVREKVKAICKKLPVYGA.

(6S)-5,6,7,8-tetrahydrofolate is bound by residues L121 and 125–127; that span reads GHL. K229 carries the N6-(pyridoxal phosphate)lysine modification. 354-356 contributes to the (6S)-5,6,7,8-tetrahydrofolate binding site; the sequence is SPF.

It belongs to the SHMT family. Homodimer. Requires pyridoxal 5'-phosphate as cofactor.

It is found in the cytoplasm. The enzyme catalyses (6R)-5,10-methylene-5,6,7,8-tetrahydrofolate + glycine + H2O = (6S)-5,6,7,8-tetrahydrofolate + L-serine. The protein operates within one-carbon metabolism; tetrahydrofolate interconversion. It functions in the pathway amino-acid biosynthesis; glycine biosynthesis; glycine from L-serine: step 1/1. Its function is as follows. Catalyzes the reversible interconversion of serine and glycine with tetrahydrofolate (THF) serving as the one-carbon carrier. This reaction serves as the major source of one-carbon groups required for the biosynthesis of purines, thymidylate, methionine, and other important biomolecules. Also exhibits THF-independent aldolase activity toward beta-hydroxyamino acids, producing glycine and aldehydes, via a retro-aldol mechanism. In Pseudomonas fluorescens (strain ATCC BAA-477 / NRRL B-23932 / Pf-5), this protein is Serine hydroxymethyltransferase 1.